The following is a 440-amino-acid chain: Cyclic dipeptide prenyltransferase (440 aa).

The interval 1–33 (MDGEMTASPPDISACDTSAVDEQTGQSGQSQAP) is disordered. Residues 20–32 (VDEQTGQSGQSQA) show a composition bias toward polar residues. The substrate site is built by threonine 108 and glutamate 116. 3 residues coordinate dimethylallyl diphosphate: arginine 129, lysine 219, and tyrosine 221. Residue phenylalanine 223 participates in substrate binding. Dimethylallyl diphosphate contacts are provided by lysine 286, tyrosine 288, tyrosine 366, tyrosine 431, and tyrosine 435.

It belongs to the tryptophan dimethylallyltransferase family.

The catalysed reaction is harmol + dimethylallyl diphosphate = 6-(3-dimethylallyl)harmol + diphosphate. It carries out the reaction an N-terminal L-tryptophanyl-L-alpha-aminoacyl-[peptide] + H2O = an N-terminal L-alpha-aminoacyl-[peptide] + L-tryptophan. It catalyses the reaction (R)-benzodiazepinedione + dimethylallyl diphosphate = (2S,3R,11R)-aszonalenin + diphosphate. The enzyme catalyses (S)-benzodiazepinedione + dimethylallyl diphosphate = (2S,3R,11S)-aszonalenin + diphosphate. Functionally, prenyltransferase that catalyzes reverse prenylation at position N-1 of tryptophan-containing cyclic dipeptides. Accepts only dimethylallyl diphosphate (DMAPP) as the prenyl donor but shows broad substrate specificities toward its aromatic substrates. Also shows tryptophan aminopeptidase activity with preference for linear peptides containing a tryptophanyl moiety at the N-terminus. The chain is Cyclic dipeptide prenyltransferase from Aspergillus fumigatus (Neosartorya fumigata).